The sequence spans 221 residues: Flavin-dependent thymidylate synthase (221 aa).

One can recognise a ThyX domain in the interval 9 to 209 (GFVKLLDHMG…PWTYESFIRY (201 aa)). Residues Ser-55, 78–80 (RHR), and Glu-86 each bind FAD. DUMP contacts are provided by residues 75 to 78 (QWMR), 86 to 90 (ELSGR), and Arg-148. Residues 78–88 (RHRIASYNELS) carry the ThyX motif motif. Residues 164–166 (NAR) and Asn-170 contribute to the FAD site. Arg-175 is a dUMP binding site. Arg-175 (involved in ionization of N3 of dUMP, leading to its activation) is an active-site residue.

It belongs to the thymidylate synthase ThyX family. Homotetramer. FAD serves as cofactor.

The catalysed reaction is dUMP + (6R)-5,10-methylene-5,6,7,8-tetrahydrofolate + NADPH + H(+) = dTMP + (6S)-5,6,7,8-tetrahydrofolate + NADP(+). The protein operates within pyrimidine metabolism; dTTP biosynthesis. Catalyzes the reductive methylation of 2'-deoxyuridine-5'-monophosphate (dUMP) to 2'-deoxythymidine-5'-monophosphate (dTMP) while utilizing 5,10-methylenetetrahydrofolate (mTHF) as the methyl donor, and NADPH and FADH(2) as the reductant. This chain is Flavin-dependent thymidylate synthase, found in Pseudothermotoga lettingae (strain ATCC BAA-301 / DSM 14385 / NBRC 107922 / TMO) (Thermotoga lettingae).